A 279-amino-acid polypeptide reads, in one-letter code: uncharacterized protein (279 aa).

Disordered regions lie at residues 50–109 (YTYN…YNKN) and 249–279 (SQSQ…SPKL). Residues 68-109 (NNNSNYNNNNNNNNNNNNNNNNNNNNNNNKNNNNNNYNYNKN) show a composition bias toward low complexity.

This is an uncharacterized protein from Dictyostelium discoideum (Social amoeba).